The primary structure comprises 85 residues: Translation initiation factor IF-1 1 (85 aa).

One can recognise an S1-like domain in the interval 1 to 72 (MAKEELIEMS…SKGRITFRHL (72 aa)).

The protein belongs to the IF-1 family. As to quaternary structure, component of the 30S ribosomal translation pre-initiation complex which assembles on the 30S ribosome in the order IF-2 and IF-3, IF-1 and N-formylmethionyl-tRNA(fMet); mRNA recruitment can occur at any time during PIC assembly.

It is found in the cytoplasm. Its function is as follows. One of the essential components for the initiation of protein synthesis. Stabilizes the binding of IF-2 and IF-3 on the 30S subunit to which N-formylmethionyl-tRNA(fMet) subsequently binds. Helps modulate mRNA selection, yielding the 30S pre-initiation complex (PIC). Upon addition of the 50S ribosomal subunit IF-1, IF-2 and IF-3 are released leaving the mature 70S translation initiation complex. The sequence is that of Translation initiation factor IF-1 1 from Aromatoleum aromaticum (strain DSM 19018 / LMG 30748 / EbN1) (Azoarcus sp. (strain EbN1)).